Reading from the N-terminus, the 1173-residue chain is WASH complex subunit 4 (1173 aa).

An N-acetylalanine modification is found at alanine 2. Serine 7 is modified (phosphoserine). The interval 705–1173 (KDLALFFSLN…STVSADPVVK (469 aa)) is sufficient for interaction with WASHC5. Residues 1135–1161 (RADKTAAEENQEKKEKEEETKTSNGDL) are a coiled coil. A compositionally biased stretch (basic and acidic residues) spans 1142–1155 (EENQEKKEKEEETK). The tract at residues 1142–1173 (EENQEKKEKEEETKTSNGDLSDSTVSADPVVK) is disordered. A Phosphothreonine modification is found at threonine 1154. A compositionally biased stretch (polar residues) spans 1157 to 1167 (SNGDLSDSTVS).

The protein belongs to the SWIP family. In terms of assembly, component of the WASH core complex also described as WASH regulatory complex (SHRC) composed of WASH (WASHC1, WASH2P or WASH3P), WASHC2 (WASHC2A or WASHC2C), WASHC3, WASHC4 and WASHC5. The WASH core complex associates via WASHC2 with the F-actin-capping protein dimer (formed by CAPZA1, CAPZA2 or CAPZA3 and CAPZB) in a transient or substoichiometric manner which was initially described as WASH complex.

The protein resides in the early endosome. Its function is as follows. Acts as a component of the WASH core complex that functions as a nucleation-promoting factor (NPF) at the surface of endosomes, where it recruits and activates the Arp2/3 complex to induce actin polymerization, playing a key role in the fission of tubules that serve as transport intermediates during endosome sorting. This chain is WASH complex subunit 4, found in Homo sapiens (Human).